The chain runs to 217 residues: Monomethylamine corrinoid protein 2 (217 aa).

Residues 1–91 (MTNTEIFEKL…ELEKSKVEGE (91 aa)) enclose the B12-binding N-terminal domain. Residues 93-217 (TGLAITFVAE…AAKVALNIMK (125 aa)) form the B12-binding domain. His-106 is a methylcob(III)alamin binding site.

It belongs to the methylamine corrinoid protein family. Can form a complex with MtmB.

It functions in the pathway one-carbon metabolism; methanogenesis from methylamine. Its function is as follows. Acts as a methyl group carrier between MtmB and MtbA. This is Monomethylamine corrinoid protein 2 (mtmC2) from Methanosarcina acetivorans (strain ATCC 35395 / DSM 2834 / JCM 12185 / C2A).